We begin with the raw amino-acid sequence, 245 residues long: MTTPILNSSVPGNIQKKSLEGTHIAISGLIGAGKTTLAVALGKVLNLPTYFEEVIDNLYLQDFYKDPKKYGFQLQIYLLNSRFQQQQQIIWQARGGVQDRTIYEDSVFAKMLNESGLLDDRDYNTYCKLFQNLSNFMRRPDLIIHLDVSPEKSLERIKLRNRDCEKDVSLEYLQNLYNAYHEFLQDISRYIPVIRINWSEFVDPEQLAQMIKAEYESMRFMNQINPPTFGNGPTTNKIISTPKDL.

An ATP-binding site is contributed by 28–36 (GLIGAGKTT). 3 residues coordinate substrate: Glu-52, Tyr-64, and Gln-75. The active-site Proton acceptor is Asp-99. Residues Arg-100, Asp-105, and Glu-165 each coordinate substrate.

The protein belongs to the DCK/DGK family.

The enzyme catalyses 2'-deoxyadenosine + ATP = dAMP + ADP + H(+). Its function is as follows. Specific kinase that phosphorylates deoxyadenosine but not any other deoxyribonucleoside, as part of the deoxyribonucleotide salvage pathway. The protein is Deoxyadenosine kinase (dak) of Dictyostelium discoideum (Social amoeba).